The following is a 136-amino-acid chain: Small ribosomal subunit protein eS19 (136 aa).

Lys-23 is modified (N6-acetyllysine). The residue at position 67 (Arg-67) is an Omega-N-methylarginine. N6-acetyllysine is present on residues Lys-111 and Lys-115. Residues 116–136 (DQDGGRKLTPQGQRDLDRIAG) form a disordered region.

The protein belongs to the eukaryotic ribosomal protein eS19 family. In terms of assembly, component of the small ribosomal subunit. Part of the small subunit (SSU) processome, composed of more than 70 proteins and the RNA chaperone small nucleolar RNA (snoRNA) U3. Interacts with RPS19BP1; the interaction is direct and mediates the integration of RPS19 in state post-A1. Interacts with RPS19BP1.

The protein localises to the cytoplasm. It is found in the nucleus. The protein resides in the nucleolus. Functionally, component of the small ribosomal subunit. The ribosome is a large ribonucleoprotein complex responsible for the synthesis of proteins in the cell. Required for pre-rRNA processing and maturation of 40S ribosomal subunits. Part of the small subunit (SSU) processome, first precursor of the small eukaryotic ribosomal subunit. During the assembly of the SSU processome in the nucleolus, many ribosome biogenesis factors, an RNA chaperone and ribosomal proteins associate with the nascent pre-rRNA and work in concert to generate RNA folding, modifications, rearrangements and cleavage as well as targeted degradation of pre-ribosomal RNA by the RNA exosome. The protein is Small ribosomal subunit protein eS19 (RPS19) of Sus scrofa (Pig).